A 92-amino-acid chain; its full sequence is Ig kappa chain V region 3381 (92 aa).

Residues 1–23 (AFELTQTPASVEAAVGGTVTINC) form a framework-1 region. The complementarity-determining-1 stretch occupies residues 24-34 (QASESISNWLA). Residues 35 to 49 (WYQQKPGQPXKLLIY) form a framework-2 region. Residues 50-56 (KASTLAS) form a complementarity-determining-2 region. Residues 57-88 (GVSSRFKGSGSGTQFTLTISDLECADAATYYC) are framework-3. The segment at 89–92 (QSTD) is complementarity-determining-3.

The protein is Ig kappa chain V region 3381 of Oryctolagus cuniculus (Rabbit).